The following is a 967-amino-acid chain: Phosphatidylserine decarboxylase proenzyme 3 (967 aa).

Residues 217–255 (FIAEPDSSIPPSESSVSISTDTGKETPPSKSKKSSNQPY) form a disordered region. The span at 220–237 (EPDSSIPPSESSVSISTD) shows a compositional bias: low complexity. In terms of domain architecture, C2 spans 250 to 373 (SSNQPYVSIG…SSAQVDPETG (124 aa)). 3 residues coordinate Ca(2+): Asp-343, Ser-346, and Asp-349. The segment covering 532 to 544 (DQQATQTPQSPSS) has biased composition (low complexity). The segment at 532–566 (DQQATQTPQSPSSNEESGPGTPTQTSDQYEDSEDS) is disordered. Over residues 545 to 558 (NEESGPGTPTQTSD) the composition is skewed to polar residues. Active-site charge relay system; for autoendoproteolytic cleavage activity residues include Asp-769, His-825, and Ser-912. Residue Ser-912 is the Schiff-base intermediate with substrate; via pyruvic acid; for decarboxylase activity of the active site. At Ser-912 the chain carries Pyruvic acid (Ser); by autocatalysis. The interval 947 to 967 (IGQKIDPNKPTDAEDHSKSDS) is disordered.

This sequence belongs to the phosphatidylserine decarboxylase family. PSD-B subfamily. Eukaryotic type II sub-subfamily. As to quaternary structure, heterodimer of a large membrane-associated beta subunit and a small pyruvoyl-containing alpha subunit. It depends on pyruvate as a cofactor. Requires Ca(2+) as cofactor. Is synthesized initially as an inactive proenzyme. Formation of the active enzyme involves a self-maturation process in which the active site pyruvoyl group is generated from an internal serine residue via an autocatalytic post-translational modification. Two non-identical subunits are generated from the proenzyme in this reaction, and the pyruvate is formed at the N-terminus of the alpha chain, which is derived from the carboxyl end of the proenzyme. The autoendoproteolytic cleavage occurs by a canonical serine protease mechanism, in which the side chain hydroxyl group of the serine supplies its oxygen atom to form the C-terminus of the beta chain, while the remainder of the serine residue undergoes an oxidative deamination to produce ammonia and the pyruvoyl prosthetic group on the alpha chain. During this reaction, the Ser that is part of the protease active site of the proenzyme becomes the pyruvoyl prosthetic group, which constitutes an essential element of the active site of the mature decarboxylase.

The protein localises to the golgi apparatus membrane. Its subcellular location is the endosome membrane. It is found in the cytoplasm. It carries out the reaction a 1,2-diacyl-sn-glycero-3-phospho-L-serine + H(+) = a 1,2-diacyl-sn-glycero-3-phosphoethanolamine + CO2. It functions in the pathway phospholipid metabolism; phosphatidylethanolamine biosynthesis; phosphatidylethanolamine from CDP-diacylglycerol: step 2/2. In terms of biological role, catalyzes the formation of phosphatidylethanolamine (PtdEtn) from phosphatidylserine (PtdSer). Plays a central role in phospholipid metabolism and in the interorganelle trafficking of phosphatidylserine. Together with psd1 and psd2, responsible for the majority of phosphatidylethanolamine synthesis. This is Phosphatidylserine decarboxylase proenzyme 3 from Schizosaccharomyces pombe (strain 972 / ATCC 24843) (Fission yeast).